A 256-amino-acid chain; its full sequence is Small ribosomal subunit protein uS2 (256 aa).

Belongs to the universal ribosomal protein uS2 family.

The protein is Small ribosomal subunit protein uS2 of Brucella abortus (strain S19).